The following is a 146-amino-acid chain: P antigen family member 1 (146 aa).

Positions 16-146 (YVESSEESSD…PEEDEGQSQP (131 aa)) are disordered. The span at 19–32 (SSEESSDEQPDEVE) shows a compositional bias: acidic residues. A Phosphoserine modification is found at S63. Residues 79–92 (PDTKRVCLRNEEQM) show a composition bias toward basic and acidic residues. The residue at position 105 (S105) is a Phosphoserine. Residues 107–120 (EQVHPKTGCERGDG) show a composition bias toward basic and acidic residues. The residue at position 144 (S144) is a Phosphoserine.

Belongs to the GAGE family. In terms of tissue distribution, isolated from prostate cancer cell lines; expression associated with progression to androgen insensitive phenotype. Expressed in normal testis and at lower level in normal placenta.

The chain is P antigen family member 1 (PAGE1) from Homo sapiens (Human).